We begin with the raw amino-acid sequence, 362 residues long: DNA polymerase IV (362 aa).

The 182-residue stretch at isoleucine 6–glycine 187 folds into the UmuC domain. 2 residues coordinate Mg(2+): aspartate 10 and aspartate 105. Glutamate 106 is an active-site residue.

It belongs to the DNA polymerase type-Y family. In terms of assembly, monomer. Mg(2+) serves as cofactor.

The protein resides in the cytoplasm. It catalyses the reaction DNA(n) + a 2'-deoxyribonucleoside 5'-triphosphate = DNA(n+1) + diphosphate. In terms of biological role, poorly processive, error-prone DNA polymerase involved in untargeted mutagenesis. Copies undamaged DNA at stalled replication forks, which arise in vivo from mismatched or misaligned primer ends. These misaligned primers can be extended by PolIV. Exhibits no 3'-5' exonuclease (proofreading) activity. May be involved in translesional synthesis, in conjunction with the beta clamp from PolIII. The polypeptide is DNA polymerase IV (Leptospira interrogans serogroup Icterohaemorrhagiae serovar Lai (strain 56601)).